Here is a 252-residue protein sequence, read N- to C-terminus: Ribosomal RNA small subunit methyltransferase J (252 aa).

S-adenosyl-L-methionine contacts are provided by residues 105 to 106, 121 to 122, and D175; these read RD and ER.

Belongs to the methyltransferase superfamily. RsmJ family.

The protein localises to the cytoplasm. It catalyses the reaction guanosine(1516) in 16S rRNA + S-adenosyl-L-methionine = N(2)-methylguanosine(1516) in 16S rRNA + S-adenosyl-L-homocysteine + H(+). In terms of biological role, specifically methylates the guanosine in position 1516 of 16S rRNA. This Pasteurella multocida (strain Pm70) protein is Ribosomal RNA small subunit methyltransferase J.